The chain runs to 975 residues: E3 ubiquitin-protein ligase NEDD4-like (975 aa).

Position 2 is an N-acetylalanine (Ala2). The 123-residue stretch at 4–126 folds into the C2 domain; that stretch reads GLGEPVYGLS…TEDPTMERPY (123 aa). Disordered regions lie at residues 178–202, 244–272, and 285–312; these read DSND…WEEK, AAHR…VPEP, and DSLG…EELS. Positions 193–226 constitute a WW 1 domain; sequence PPLPPGWEEKVDNLGRTYYVNHNNRTTQWHRPSL. Ser312 carries the phosphoserine modification. Thr318 carries the post-translational modification Phosphothreonine. Ser342 bears the Phosphoserine; by WNK1 and WNK4 mark. 2 disordered regions span residues 349-393 and 424-496; these read EQGH…GWEE and GASG…KVTQ. A Phosphothreonine; by SGK1 modification is found at Thr367. Positions 385-418 constitute a WW 2 domain; it reads PGLPSGWEERKDAKGRTYYVNHNNRTTTWTRPIM. The residue at position 446 (Ser446) is a Phosphoserine. Ser448 carries the phosphoserine; by PKA and SGK1 modification. Ser449 bears the Phosphoserine; by WNK1 and WNK4 mark. Over residues 460–471 the composition is skewed to basic and acidic residues; it reads GAKDSPVRRAVK. Phosphoserine is present on residues Ser464, Ser475, Ser479, Ser483, and Ser487. 2 WW domains span residues 497 to 530 and 548 to 581; these read SFLP…DPRL and GPLP…DPRL. The HECT domain maps to 640–974; sequence RPDVLKARLW…VENAQGFEGV (335 aa). Cys942 (glycyl thioester intermediate) is an active-site residue.

In terms of assembly, interacts with UBE2E3. Interacts with NDFIP1; this interaction activates the E3 ubiquitin-protein ligase. Interacts with NDFIP2; this interaction activates the E3 ubiquitin-protein ligase. Interacts (via WW domains) with SCN1A. Interacts (via WW domains) with SCN2A. Interacts (via WW domains) with SCN3A. Interacts (via WW domains) with SCN5A. Interacts (via WW domains) with SCN8A. Interacts (via WW domains) with SCN9A. Interacts (via WW domains) with SCN10A. Interacts (via WW domains) with CLCN5. Interacts with SMAD2. Interacts with SMAD3. Interacts with SMAD6. Interacts with SMAD7. The phosphorylated form interacts with 14-3-3 proteins. Interacts with TNK2. Interacts with WNK1. Interacts with SGK1. Interacts (via C2 domain) with NPC2. Interacts with ARRDC4. Interacts with KCNQ1; promotes internalization of KCNQ1. Interacts (via domains WW1, 3 and 4) with USP36; the interaction inhibits ubiquitination of, at least, NTRK1, KCNQ2 and KCNQ3 by NEDD4L. Interacts with PRRG4 (via cytoplasmic domain). Interacts with LDLRAD3; the interaction is direct. Interacts with UBE2D2. Interacts with TTYH2 and TTYH3. As to quaternary structure, (Microbial infection) Interacts with Epstein-Barr virus LMP2A. Post-translationally, phosphorylated by SGK1 or PKA; which impairs interaction with SCNN. Interaction with YWHAH inhibits dephosphorylation. Auto-ubiquitinated. Deubiquitinated by USP36, no effect on NEDD4L protein levels. Both proteins interact and regulate each other's ubiquitination levels. As to expression, ubiquitously expressed, with highest levels in prostate, pancreas, and kidney. Expressed in melanocytes.

It localises to the cytoplasm. Its subcellular location is the golgi apparatus. The protein localises to the endosome. It is found in the multivesicular body. It carries out the reaction S-ubiquitinyl-[E2 ubiquitin-conjugating enzyme]-L-cysteine + [acceptor protein]-L-lysine = [E2 ubiquitin-conjugating enzyme]-L-cysteine + N(6)-ubiquitinyl-[acceptor protein]-L-lysine.. It catalyses the reaction [E2 ubiquitin-conjugating enzyme]-S-ubiquitinyl-L-cysteine + [acceptor protein]-L-cysteine = [E2 ubiquitin-conjugating enzyme]-L-cysteine + [acceptor protein]-S-ubiquitinyl-L-cysteine.. The protein operates within protein modification; protein ubiquitination. Activated by NDFIP1- and NDFIP2-binding. E3 ubiquitin-protein ligase that mediates the polyubiquitination of lysine and cysteine residues on target proteins and is thereby implicated in the regulation of various signaling pathways including autophagy, innate immunity or DNA repair. Inhibits TGF-beta signaling by triggering SMAD2 and TGFBR1 ubiquitination and proteasome-dependent degradation. Downregulates autophagy and cell growth by ubiquitinating and reducing cellular ULK1 or ASCT2 levels. Promotes ubiquitination and internalization of various plasma membrane channels such as ENaC, SCN2A/Nav1.2, SCN3A/Nav1.3, SCN5A/Nav1.5, SCN9A/Nav1.7, SCN10A/Nav1.8, KCNA3/Kv1.3, KCNH2, EAAT1, KCNQ2/Kv7.2, KCNQ3/Kv7.3 or CLC5. Promotes ubiquitination and degradation of SGK1 and TNK2. Ubiquitinates BRAT1 and this ubiquitination is enhanced in the presence of NDFIP1. Plays a role in dendrite formation by melanocytes. Involved in the regulation of TOR signaling. Ubiquitinates and regulates protein levels of NTRK1 once this one is activated by NGF. Plays a role in antiviral innate immunity by catalyzing 'Lys-29'-linked cysteine ubiquitination of TRAF3, resulting in enhanced 'Lys-48' and 'Lys-63'-linked ubiquitination of TRAF3. Ubiquitinates TTYH2 and TTYH3 and regulates protein levels of TTYH2. This chain is E3 ubiquitin-protein ligase NEDD4-like, found in Homo sapiens (Human).